The sequence spans 469 residues: UDP-N-acetylmuramate--L-alanine ligase (469 aa).

123 to 129 (GSHGKTT) is an ATP binding site.

This sequence belongs to the MurCDEF family.

The protein resides in the cytoplasm. It carries out the reaction UDP-N-acetyl-alpha-D-muramate + L-alanine + ATP = UDP-N-acetyl-alpha-D-muramoyl-L-alanine + ADP + phosphate + H(+). Its pathway is cell wall biogenesis; peptidoglycan biosynthesis. Cell wall formation. The chain is UDP-N-acetylmuramate--L-alanine ligase from Synechococcus sp. (strain CC9605).